Reading from the N-terminus, the 110-residue chain is UPF0102 protein Abu_0255 (110 aa).

This sequence belongs to the UPF0102 family.

The sequence is that of UPF0102 protein Abu_0255 from Aliarcobacter butzleri (strain RM4018) (Arcobacter butzleri).